A 335-amino-acid chain; its full sequence is MKCTSKIYTDNDANLDLIKGKRIAVLGYGSQGRAWAQNLRDSGLNVVVGLEREGKSWELAKSDGITPLHTKDAVKDADIIIFLVPDMVQRTLWLESVQPYMKKGADLVFAHGFNIHYKLIDPPKDSDVYMIAPKGPGPTVREYYKAGGGVPALVAVHQDVSGTALHKALAIAKGIGATRAGVIPTTFKEETETDLFGEQVILVGGIMELMRAAFETLVEEGYQPEVAYFETINELKMLVDLVYEKGISGMLKAVSDTAKYGGMTVGKFVIDESVRKRMKEALQRIKSGKFAEEWVEEYGRGMPTVVNGLSNVQNSLEEKIGNQLRDLVQKGKPKS.

One can recognise a KARI N-terminal Rossmann domain in the interval 5 to 185 (SKIYTDNDAN…GATRAGVIPT (181 aa)). NADP(+) contacts are provided by residues 28–31 (YGSQ), serine 56, and 86–89 (DMVQ). Residue histidine 111 is part of the active site. Residue glycine 137 coordinates NADP(+). Residues 186–331 (TFKEETETDL…NQLRDLVQKG (146 aa)) enclose the KARI C-terminal knotted domain. 4 residues coordinate Mg(2+): aspartate 194, glutamate 198, glutamate 230, and glutamate 234. Residue serine 255 participates in substrate binding.

This sequence belongs to the ketol-acid reductoisomerase family. Requires Mg(2+) as cofactor.

It catalyses the reaction (2R)-2,3-dihydroxy-3-methylbutanoate + NADP(+) = (2S)-2-acetolactate + NADPH + H(+). The catalysed reaction is (2R,3R)-2,3-dihydroxy-3-methylpentanoate + NADP(+) = (S)-2-ethyl-2-hydroxy-3-oxobutanoate + NADPH + H(+). The protein operates within amino-acid biosynthesis; L-isoleucine biosynthesis; L-isoleucine from 2-oxobutanoate: step 2/4. Its pathway is amino-acid biosynthesis; L-valine biosynthesis; L-valine from pyruvate: step 2/4. Involved in the biosynthesis of branched-chain amino acids (BCAA). Catalyzes an alkyl-migration followed by a ketol-acid reduction of (S)-2-acetolactate (S2AL) to yield (R)-2,3-dihydroxy-isovalerate. In the isomerase reaction, S2AL is rearranged via a Mg-dependent methyl migration to produce 3-hydroxy-3-methyl-2-ketobutyrate (HMKB). In the reductase reaction, this 2-ketoacid undergoes a metal-dependent reduction by NADPH to yield (R)-2,3-dihydroxy-isovalerate. This chain is Ketol-acid reductoisomerase (NADP(+)), found in Saccharolobus solfataricus (strain ATCC 35092 / DSM 1617 / JCM 11322 / P2) (Sulfolobus solfataricus).